The primary structure comprises 701 residues: MATTHTLLSFDNLEFLLHRKDLTDLYGKRCGTLNLVINPYELFLPDELDDDCCDDPFNCCFSDVYASIGTEYSYIDPPDLIYEEHCATNGTWPDGTPCEPILPPFTITGTHHYYATKPGEVVSGILSKLRVFLGSLLRSTADVNSNFTFRAESDGPGSTEIVTEEQGTIVQQQPAPAPTALATLATASTGKSVEQEWMTFFSYHTSINWSTVESQGKVLYSQALNPSINPYLDHISKLYSTWSGGIDVRFTVSGSGVFGGKLAALLVPPGVEPIESVSMLQYPHVLFDARQTEPVIFTIPDIRKTLFHSMDETDTTKLVIMVYKNGADTKTTCSITVETRPSADFTFALLKPPGSLIKHGSIPSDLIPRNSAHWLGNRWWSMISGFSVQPRVFQSNRHFDFDSTTTGWSTPYYIPIEITITAKVKGNNHWYHVIAHDKALVPGIPDGWPDTTIPSEVHASNGNFDYAKGFHDDKEIVNPANNNTHFKGTYICGTLSTIKDPEKAENQSESQKKSSTMYVATADLGDNKVKPQHKISSQKLVVYFDGPEKDLTMNATLSPLGYTLVDDQPIGSNSSTVVRIATLPEAFTQGGNYPIFYVNKTNKGYFDKATTDCYNSQILMTSQRLAEGNYSLPPDSLAVYRITDSSSQWFDIGINHDGFSYVGLPDLPADLTFPLTSTFMGVQLARVKLASKVKVTRNSIK.

It belongs to the caliciviridae capsid protein family. As to quaternary structure, homodimer. Homomultimer. Interacts with the minor capsid protein VP2. May bind to VP3 and Vpg proteins. In terms of processing, cleaved by the viral protease to produce mature capsid protein.

The protein localises to the virion. It is found in the host cytoplasm. In terms of biological role, capsid protein self assembles to form an icosahedral capsid with a T=3 symmetry, about 38 nm in diameter, and consisting of 180 capsid proteins. A smaller form of capsid with a diameter of 23 nm might be capsid proteins assembled as icosahedron with T=1 symmetry. The capsid encapsulates the genomic RNA and is decorated with VP2 proteins. This chain is Capsid protein VP1, found in Vesicular exanthema of swine virus serotype A48 (isolate Swine/United States/A48/1948) (VESV).